The following is a 634-amino-acid chain: Threonine--tRNA ligase (634 aa).

The TGS domain occupies Met-1–Thr-61. A catalytic region spans residues Asp-242–Pro-532. The Zn(2+) site is built by Cys-333, His-384, and His-509.

Belongs to the class-II aminoacyl-tRNA synthetase family. Homodimer. Zn(2+) is required as a cofactor.

The protein localises to the cytoplasm. It catalyses the reaction tRNA(Thr) + L-threonine + ATP = L-threonyl-tRNA(Thr) + AMP + diphosphate + H(+). Its function is as follows. Catalyzes the attachment of threonine to tRNA(Thr) in a two-step reaction: L-threonine is first activated by ATP to form Thr-AMP and then transferred to the acceptor end of tRNA(Thr). Also edits incorrectly charged L-seryl-tRNA(Thr). The sequence is that of Threonine--tRNA ligase from Carboxydothermus hydrogenoformans (strain ATCC BAA-161 / DSM 6008 / Z-2901).